Reading from the N-terminus, the 380-residue chain is Alcohol dehydrogenase (380 aa).

Zn(2+)-binding residues include Cys48, Thr50, His70, Cys100, Cys103, Cys106, Cys114, and Cys178. An alcohol contacts are provided by Thr50 and His70. Residue Thr50 participates in NAD(+) binding. NAD(+) is bound by residues 203–208 (GLGAVG), Asp227, Arg232, Thr273, Val296, 296–298 (VGV), Phe323, and Arg373.

Belongs to the zinc-containing alcohol dehydrogenase family. In terms of assembly, homodimer. The cofactor is Zn(2+).

It localises to the cytoplasm. It catalyses the reaction a primary alcohol + NAD(+) = an aldehyde + NADH + H(+). The enzyme catalyses a secondary alcohol + NAD(+) = a ketone + NADH + H(+). The chain is Alcohol dehydrogenase (ADH) from Malus domestica (Apple).